Reading from the N-terminus, the 794-residue chain is Inactive zinc metalloprotease C354.09c (794 aa).

A disordered region spans residues 1-56; it reads MTDEKHVYVPPPKDPPSYEEVALHSALNNSAPPNDGEQNETSMEEMEIIEPPSEDS. A helical membrane pass occupies residues 91 to 111; it reads IPFQFLYLAVIATVIILASYY.

The protein belongs to the peptidase M28 family. M28B subfamily.

It localises to the membrane. The protein is Inactive zinc metalloprotease C354.09c of Schizosaccharomyces pombe (strain 972 / ATCC 24843) (Fission yeast).